The sequence spans 694 residues: Potassium-transporting ATPase ATP-binding subunit (694 aa).

The next 4 helical transmembrane spans lie at 36 to 56 (VMFV…RDLI), 62 to 82 (LAFS…ANFA), 218 to 238 (IALN…TATI), and 249 to 269 (IPII…IGAL). Asp306 acts as the 4-aspartylphosphate intermediate in catalysis. ATP contacts are provided by residues Asp343, Glu347, 376–383 (FTAQTRMS), and Lys394. Mg(2+)-binding residues include Asp530 and Asp534. Transmembrane regions (helical) follow at residues 600–620 (FAII…LNVM), 628–648 (AILS…PLSL), and 666–686 (LVIY…LIDL).

It belongs to the cation transport ATPase (P-type) (TC 3.A.3) family. Type IA subfamily. In terms of assembly, the system is composed of three essential subunits: KdpA, KdpB and KdpC.

It is found in the cell inner membrane. The catalysed reaction is K(+)(out) + ATP + H2O = K(+)(in) + ADP + phosphate + H(+). Its function is as follows. Part of the high-affinity ATP-driven potassium transport (or Kdp) system, which catalyzes the hydrolysis of ATP coupled with the electrogenic transport of potassium into the cytoplasm. This subunit is responsible for energy coupling to the transport system and for the release of the potassium ions to the cytoplasm. This is Potassium-transporting ATPase ATP-binding subunit from Agrobacterium fabrum (strain C58 / ATCC 33970) (Agrobacterium tumefaciens (strain C58)).